The chain runs to 159 residues: Ribosome maturation factor RimP (159 aa).

This sequence belongs to the RimP family.

It is found in the cytoplasm. Its function is as follows. Required for maturation of 30S ribosomal subunits. The sequence is that of Ribosome maturation factor RimP from Bordetella avium (strain 197N).